A 108-amino-acid polypeptide reads, in one-letter code: MSAQTNSGIQQLLEAEKVARNIVEKARQHRTQRLKDARLEAKREIDEYASKKEEEFKKSESQASGIYSQAEAESKKQVQDTFASIETSSQKNSDKVVDAILSITCNVK.

Basic and acidic residues predominate over residues 48-60; it reads YASKKEEEFKKSE. Residues 48–89 are disordered; the sequence is YASKKEEEFKKSESQASGIYSQAEAESKKQVQDTFASIETSS. Residues 79–89 show a composition bias toward polar residues; sequence QDTFASIETSS.

It belongs to the V-ATPase G subunit family. In terms of assembly, V-ATPase is a heteromultimeric enzyme composed of a peripheral catalytic V1 complex (components A to H) attached to an integral membrane V0 proton pore complex (components: a, c, c', c'', d, e, f and VOA1).

The protein resides in the vacuole membrane. Subunit of the V1 complex of vacuolar(H+)-ATPase (V-ATPase), a multisubunit enzyme composed of a peripheral complex (V1) that hydrolyzes ATP and a membrane integral complex (V0) that translocates protons. V-ATPase is responsible for acidifying and maintaining the pH of intracellular compartments. The sequence is that of V-type proton ATPase subunit G (vma10) from Schizosaccharomyces pombe (strain 972 / ATCC 24843) (Fission yeast).